Reading from the N-terminus, the 188-residue chain is Cytochrome b-245 chaperone 1 homolog (188 aa).

The helical transmembrane segment at S20–T42 threads the bilayer.

It belongs to the CYBC1 family.

It localises to the endoplasmic reticulum membrane. Functionally, functions as a chaperone necessary for a stable expression of the CYBA and CYBB subunits of the cytochrome b-245 heterodimer. The chain is Cytochrome b-245 chaperone 1 homolog (cybc1) from Xenopus tropicalis (Western clawed frog).